A 173-amino-acid polypeptide reads, in one-letter code: tRNA-specific adenosine deaminase (173 aa).

The CMP/dCMP-type deaminase domain occupies 9–121 (EFDEKMMRYA…DYKTGAIGSR (113 aa)). His-61 serves as a coordination point for Zn(2+). Residue Glu-63 is the Proton donor of the active site. Positions 91 and 94 each coordinate Zn(2+).

The protein belongs to the cytidine and deoxycytidylate deaminase family. In terms of assembly, homodimer. Zn(2+) is required as a cofactor.

It catalyses the reaction adenosine(34) in tRNA + H2O + H(+) = inosine(34) in tRNA + NH4(+). Its function is as follows. Catalyzes the deamination of adenosine to inosine at the wobble position 34 of tRNA(Arg2). This chain is tRNA-specific adenosine deaminase, found in Haemophilus influenzae (strain ATCC 51907 / DSM 11121 / KW20 / Rd).